The following is a 459-amino-acid chain: tRNA modification GTPase MnmE (459 aa).

Positions 30, 93, and 132 each coordinate (6S)-5-formyl-5,6,7,8-tetrahydrofolate. Positions 226 to 381 (GVTMAIVGKP…LEEKILESVK (156 aa)) constitute a TrmE-type G domain. Residue Asn-236 participates in K(+) binding. GTP contacts are provided by residues 236–241 (NVGKST), 255–261 (TDIPGTT), and 280–283 (DTAG). Residue Ser-240 coordinates Mg(2+). Residues Thr-255, Ile-257, and Thr-260 each contribute to the K(+) site. Thr-261 provides a ligand contact to Mg(2+). Residue Lys-459 participates in (6S)-5-formyl-5,6,7,8-tetrahydrofolate binding.

It belongs to the TRAFAC class TrmE-Era-EngA-EngB-Septin-like GTPase superfamily. TrmE GTPase family. As to quaternary structure, homodimer. Heterotetramer of two MnmE and two MnmG subunits. The cofactor is K(+).

The protein localises to the cytoplasm. Exhibits a very high intrinsic GTPase hydrolysis rate. Involved in the addition of a carboxymethylaminomethyl (cmnm) group at the wobble position (U34) of certain tRNAs, forming tRNA-cmnm(5)s(2)U34. This is tRNA modification GTPase MnmE from Fervidobacterium nodosum (strain ATCC 35602 / DSM 5306 / Rt17-B1).